Consider the following 1204-residue polypeptide: E3 ubiquitin-protein ligase DZIP3 (1204 aa).

Disordered stretches follow at residues 1–22 and 640–681; these read MDSLAEEFFVSGNPDVEEQTKE and SIPS…EQVS. Residues 649 to 658 show a composition bias toward basic and acidic residues; the sequence is SVKDLQEVKS. Basic residues predominate over residues 659–668; the sequence is KTKKKKRTKS. Coiled coils occupy residues 746-861 and 906-941; these read KETE…TSRA and QLKAAVDSWNAIVADVRNKIAFLRTQYNEQINKVKQ. The segment covering 1088-1098 has biased composition (basic and acidic residues); the sequence is PKKSESEEKSA. The segment at 1088–1141 is disordered; it reads PKKSESEEKSAQDGNNASPSHTASQPNAPQDPKSAQGSATWEGDKDMDNEEEEE. Positions 1099 to 1126 are enriched in polar residues; the sequence is QDGNNASPSHTASQPNAPQDPKSAQGSA. Residues 1132 to 1141 are compositionally biased toward acidic residues; it reads KDMDNEEEEE. The segment at 1144–1184 adopts an RING-type; atypical zinc-finger fold; that stretch reads CVICHENLSPENLSVLPCAHKFHSQCIRPWLMQQGTCPTCR.

Probably interacts with DAZL.

The protein resides in the cytoplasm. It carries out the reaction S-ubiquitinyl-[E2 ubiquitin-conjugating enzyme]-L-cysteine + [acceptor protein]-L-lysine = [E2 ubiquitin-conjugating enzyme]-L-cysteine + N(6)-ubiquitinyl-[acceptor protein]-L-lysine.. The protein operates within protein modification; protein ubiquitination. In terms of biological role, E3 Ubiquitin ligase proteins mediate ubiquitination and subsequent proteasomal degradation of target proteins. E3 ubiquitin ligases accept ubiquitin from an E2 ubiquitin-conjugating enzyme in the form of a thioester and then directly transfers the ubiquitin to targeted substrates. Able to specifically bind RNA. The chain is E3 ubiquitin-protein ligase DZIP3 (Dzip3) from Mus musculus (Mouse).